Reading from the N-terminus, the 597-residue chain is Elongation factor 4 (597 aa).

The tr-type G domain occupies 2-184; it reads KHIRNFSIIA…EIVARIPAPV (183 aa). Residues 14–19 and 131–134 each bind GTP; these read DHGKST and NKID.

Belongs to the TRAFAC class translation factor GTPase superfamily. Classic translation factor GTPase family. LepA subfamily.

It is found in the cell inner membrane. It carries out the reaction GTP + H2O = GDP + phosphate + H(+). Its function is as follows. Required for accurate and efficient protein synthesis under certain stress conditions. May act as a fidelity factor of the translation reaction, by catalyzing a one-codon backward translocation of tRNAs on improperly translocated ribosomes. Back-translocation proceeds from a post-translocation (POST) complex to a pre-translocation (PRE) complex, thus giving elongation factor G a second chance to translocate the tRNAs correctly. Binds to ribosomes in a GTP-dependent manner. The chain is Elongation factor 4 from Aeromonas salmonicida (strain A449).